The following is a 119-amino-acid chain: Large ribosomal subunit protein bL19 (119 aa).

This sequence belongs to the bacterial ribosomal protein bL19 family.

In terms of biological role, this protein is located at the 30S-50S ribosomal subunit interface and may play a role in the structure and function of the aminoacyl-tRNA binding site. The protein is Large ribosomal subunit protein bL19 of Limosilactobacillus fermentum (strain NBRC 3956 / LMG 18251) (Lactobacillus fermentum).